The sequence spans 325 residues: GMP reductase (325 aa).

Cys174 (thioimidate intermediate) is an active-site residue. 203–226 (MIADGGIRTHGDIAKSIRFGASMV) is an NADP(+) binding site.

It belongs to the IMPDH/GMPR family. GuaC type 2 subfamily.

The enzyme catalyses IMP + NH4(+) + NADP(+) = GMP + NADPH + 2 H(+). Catalyzes the irreversible NADPH-dependent deamination of GMP to IMP. It functions in the conversion of nucleobase, nucleoside and nucleotide derivatives of G to A nucleotides, and in maintaining the intracellular balance of A and G nucleotides. The protein is GMP reductase of Staphylococcus carnosus (strain TM300).